The chain runs to 334 residues: Nucleoid-associated protein plu2870 (334 aa).

Belongs to the YejK family.

It is found in the cytoplasm. Its subcellular location is the nucleoid. This is Nucleoid-associated protein plu2870 from Photorhabdus laumondii subsp. laumondii (strain DSM 15139 / CIP 105565 / TT01) (Photorhabdus luminescens subsp. laumondii).